Here is a 455-residue protein sequence, read N- to C-terminus: Ectonucleoside triphosphate diphosphohydrolase 6 (455 aa).

The Cytoplasmic portion of the chain corresponds to 1–12 (MRKIPNHGTLRM). The helical; Signal-anchor for type II membrane protein transmembrane segment at 13–32 (TKVAYPLGLCVGLFIYVAYI) threads the bilayer. The Lumenal portion of the chain corresponds to 33 to 455 (KWHRASAAQA…SLKRQKVPAL (423 aa)). An N-linked (GlcNAc...) asparagine glycan is attached at Asn192. Residue Glu196 is the Proton acceptor of the active site. The N-linked (GlcNAc...) asparagine glycan is linked to Asn256. Intrachain disulfides connect Cys297–Cys327 and Cys387–Cys401.

It belongs to the GDA1/CD39 NTPase family. The cofactor is Ca(2+). It depends on Mg(2+) as a cofactor. In terms of processing, might be cleaved at the N-terminus, retained in an intracellular membrane compartment and in addition be released into the extracellular medium. Post-translationally, N-glycosylated. Expressed in heart and brain.

It is found in the golgi apparatus membrane. The protein localises to the secreted. It localises to the cell membrane. It catalyses the reaction a ribonucleoside 5'-diphosphate + H2O = a ribonucleoside 5'-phosphate + phosphate + H(+). The enzyme catalyses IDP + H2O = IMP + phosphate + H(+). It carries out the reaction GDP + H2O = GMP + phosphate + H(+). The catalysed reaction is UDP + H2O = UMP + phosphate + H(+). Functionally, catalyzes the hydrolysis of nucleoside triphosphates and diphosphates in a calcium- or magnesium-dependent manner. Has a strong preference for nucleoside diphosphates, preferentially hydrolyzes GDP, IDP, and UDP, with slower hydrolysis of CDP, ITP, GTP, CTP, ADP, and UTP and virtually no hydrolysis of ATP. The membrane bound form might support glycosylation reactions in the Golgi apparatus and, when released from cells, might catalyze the hydrolysis of extracellular nucleotides. This is Ectonucleoside triphosphate diphosphohydrolase 6 (Entpd6) from Rattus norvegicus (Rat).